Reading from the N-terminus, the 528-residue chain is Linear element-associated protein hop1 (528 aa).

Positions 11-212 constitute an HORMA domain; sequence TKSDFTLKNL…RGEFKDIVSF (202 aa). The segment at 334–385 adopts a PHD-type zinc-finger fold; the sequence is LLNCECGDSTEDSEMFQCERCDGWVHCACYGFESDSDPRQPNQLLCYTCLLV. 8 residues coordinate Zn(2+): C337, C339, C351, C354, H359, C362, C379, and C382. A disordered region spans residues 507-528; that stretch reads RPKKVSKTSNTKETDTMKPLRI. The segment covering 516 to 528 has biased composition (basic and acidic residues); it reads NTKETDTMKPLRI.

In terms of assembly, interacts (via N-terminus) with rec10; the interaction is direct. Interacts (via C-terminus) with rec15 (via C-terminus); the interaction is direct.

It localises to the nucleus. The protein resides in the chromosome. In terms of biological role, facilitates initiation of meiotic recombination and DNA double-strand break (DSB) formation at DSB hotspot sites by enhancing the interaction between rec10 and rec15. The protein is Linear element-associated protein hop1 of Schizosaccharomyces pombe (strain 972 / ATCC 24843) (Fission yeast).